Consider the following 1169-residue polypeptide: MKSMIANYISEDNRFQELDEVFGQENILVTGLSPSAKATIIAEKYLKDHKQMLLVTNNLYQADKIETDILQYVDDSEVYKYPVQDIMTEEFSTQSPQLMSERVRTLTALAQGEKGLFIVPLNGFKKWLTPVDLWKDHQMTLKVGQDIDVDAFLNKLVNMGYRRESVVSHIGEFSLRGGIIDIYPLIGTPVRIELFDTEVDSIRDFDVETQRSNDNINQVEITTASDYIITDEVIQHLQNELKKAYEYTRPKIEKSVRNDLKETYESFKLFESTFFDHQLLRRLVSFMYEKPSTLIDYFQKNAIIVVDEFNRIKETEETLTTEVEDFMSNLIESGNGFIGQGFMKYESFDALLEQHAVAYFTLFTSSMQVPLQHIIKFSCKPVQQFYGQYDIMRSEFQRYVHQDYTVVVLVETETKVERIQSMLNEMHIPTVSNIHEDIDGGQVVVTEGSLSEGFELPYMQLVVITERELFKTRQKKQRKRTKTISNAEKIKSYQDLNVGDYIVHVHHGVGRYLGVETLEVGDTHRDYIKLQYKGTDQLFVPVDQMDQVQKYVASEDKSPRLNKLGGTEWKKTKAKVQQSVEDIADELIDLYKEREMSVGYQYGQDTAEQSAFEHDFPYELTPDQSKSIDEIKGDMERARPMDRLLCGDVGYGKTEVAVRAAFKAVMDGKQVAFLVPTTILAQQHYETLLERMQDFPVEIQLVSRFRTAKEIRETKEGLKSGYVDIVVGTHKLLGKDIQYKDLGLLIVDEEQRFGVRHKERIKTLKKNVDVLTLTATPIPRTLHMSMLGVRDLSVIETPPENRFPVQTYVLEQNTNFIKEALERELSRDGQVFYLYNKVQSIYEKREQLQRLMPDANIAVAHGQMTERDLEETMLSFINHEYDILVTTTIIETGVDVPNANTLIIEEADRFGLSQLYQLRGRVGRSSRIGYAYFLHPANKVLNETAEERLQAIKEFTELGSGFKIAMRDLNIRGAGNLLGKQQHGFIDSVGFDLYSQMLEEAVNEKRGIKEESPDAPDIEVELHLDAYLPAEYIQSEQAKIEIYKKLRKVETEEQLFDVKDELIDRFNDYPIEVERLLDIVEIKVHALHAGVELIKDKGKSIQIILSPKATEDINGEELFKQTQPLGRAMKVGVQNNAMNVTLTKSKQWLDSLKFLVRCIEESMAIKDED.

Residues 634 to 795 (DMERARPMDR…MLGVRDLSVI (162 aa)) enclose the Helicase ATP-binding domain. Position 647 to 654 (647 to 654 (GDVGYGKT)) interacts with ATP. Residues 748–751 (DEEQ) carry the DEEQ box motif. The 162-residue stretch at 809–970 (VLEQNTNFIK…GFKIAMRDLN (162 aa)) folds into the Helicase C-terminal domain.

In the N-terminal section; belongs to the UvrB family. This sequence in the C-terminal section; belongs to the helicase family. RecG subfamily.

The protein localises to the cytoplasm. Functionally, couples transcription and DNA repair by recognizing RNA polymerase (RNAP) stalled at DNA lesions. Mediates ATP-dependent release of RNAP and its truncated transcript from the DNA, and recruitment of nucleotide excision repair machinery to the damaged site. The sequence is that of Transcription-repair-coupling factor from Staphylococcus epidermidis (strain ATCC 35984 / DSM 28319 / BCRC 17069 / CCUG 31568 / BM 3577 / RP62A).